Consider the following 627-residue polypeptide: Chaperone protein DnaK (627 aa).

A Phosphothreonine; by autocatalysis modification is found at threonine 197. Positions 602–611 are enriched in polar residues; sequence ENQHSEANTV. Residues 602-627 form a disordered region; it reads ENQHSEANTVNDEKVVDADFQDVDKK. A compositionally biased stretch (basic and acidic residues) spans 612–627; the sequence is NDEKVVDADFQDVDKK.

The protein belongs to the heat shock protein 70 family.

In terms of biological role, acts as a chaperone. This Rickettsia felis (strain ATCC VR-1525 / URRWXCal2) (Rickettsia azadi) protein is Chaperone protein DnaK.